The following is a 254-amino-acid chain: Probable phosphatase Sbal_1472 (254 aa).

Residues His8, His10, His16, His41, Glu74, His102, His132, Asp193, and His195 each contribute to the Zn(2+) site.

Belongs to the PHP family. Zn(2+) serves as cofactor.

The polypeptide is Probable phosphatase Sbal_1472 (Shewanella baltica (strain OS155 / ATCC BAA-1091)).